The chain runs to 405 residues: Probable dual specificity protein kinase YAK1 homolog (405 aa).

A Protein kinase domain is found at 40–335 (YMIIDMLGTG…AKSLASHSYL (296 aa)). ATP contacts are provided by residues 46 to 54 (LGTGTFGQV) and K68. D163 functions as the Proton acceptor in the catalytic mechanism.

Belongs to the protein kinase superfamily. CMGC Ser/Thr protein kinase family. MNB/DYRK subfamily.

The protein localises to the cytoplasm. Its subcellular location is the nucleus. It catalyses the reaction L-seryl-[protein] + ATP = O-phospho-L-seryl-[protein] + ADP + H(+). The enzyme catalyses L-threonyl-[protein] + ATP = O-phospho-L-threonyl-[protein] + ADP + H(+). The catalysed reaction is L-tyrosyl-[protein] + ATP = O-phospho-L-tyrosyl-[protein] + ADP + H(+). In terms of biological role, negative regulator of the cell cycle acting downstream of the cAMP-dependent protein kinase. Part of a glucose-sensing system involved in growth control in response to glucose availability. The protein is Probable dual specificity protein kinase YAK1 homolog (YAK1) of Encephalitozoon cuniculi (strain GB-M1) (Microsporidian parasite).